Consider the following 439-residue polypeptide: MSGDAQPSSNQRATEARPPPSPPLVNEKAAIGALCVVCGDRACSHLYYGVAACHGCKCFFWRTVKSRLNYVCRYGGNCSISTAGRNACRYCRFHRCLFVGMKIEAVKMDRKLTKRKKEKTDEDDTDDGGSHESFETTTDAKRAKFDNSLLISSLQLIDKTSSAGNAKLSTLHFVQPSLQNLLDEPELLDGFRSEMSYRATRQADEQLCYDSERRLVTWAIDWCRQTAEIADVHHTNDKISLLRASCAPLVLLELGCQSSFGPSDTQIPFCNNSFLSAHCIPPSTSFLRWKTIQSLNKWAQRELKPLCLRAKEIVLLKALIALNPDANGLSSDAESSIRMLRERVHTALFQLLMENSEPITAASRLAQILLLIPQLSLMGVDVIEQVKVRNTFNKRSAFGEGLLFWQLYGDIFDDANDDSYLEHSASCSPTDSQYTTDSI.

The span at 1-13 (MSGDAQPSSNQRA) shows a compositional bias: polar residues. The tract at residues 1–22 (MSGDAQPSSNQRATEARPPPSP) is disordered. The nuclear receptor DNA-binding region spans 32 to 108 (GALCVVCGDR…VGMKIEAVKM (77 aa)). NR C4-type zinc fingers lie at residues 35–56 (CVVCGDRACSHLYYGVAACHGC) and 72–96 (CRYGGNCSISTAGRNACRYCRFHRC). Residues 112 to 135 (LTKRKKEKTDEDDTDDGGSHESFE) are disordered. One can recognise an NR LBD domain in the interval 173 to 408 (FVQPSLQNLL…GEGLLFWQLY (236 aa)).

It belongs to the nuclear hormone receptor family.

It localises to the nucleus. Functionally, orphan nuclear receptor. This is Nuclear hormone receptor family member nhr-97 (nhr-97) from Caenorhabditis elegans.